A 261-amino-acid polypeptide reads, in one-letter code: Protein phosphatase inhibitor 2 (261 aa).

A compositionally biased stretch (basic and acidic residues) spans 1-16 (MNKDEEFLEEHHYKDD). The segment at 1–150 (MNKDEEFLEE…TPYHYYESEE (150 aa)) is required for binding to pppB. Residues 1 to 261 (MNKDEEFLEE…LNANLSDDEQ (261 aa)) form a disordered region. The segment covering 17 to 60 (DAIEGEEEQGEEEESDLDDDMYNIDGETNDDDDDDEAEDEESSE) has biased composition (acidic residues). Residues 123–134 (LTINDMNKSSTM) show a composition bias toward polar residues. Positions 150-242 (EETDESKKYL…KKFDNLRKAH (93 aa)) form a coiled coil. Residues 154–163 (ESKKYLENKF) are compositionally biased toward basic and acidic residues. Over residues 195–206 (DKKKKKKNLKIH) the composition is skewed to basic residues. The segment covering 212–225 (DDNDDNEDEDEDET) has biased composition (acidic residues). The segment covering 226–250 (EEKKENKKKFDNLRKAHYNEFKVVR) has biased composition (basic and acidic residues).

The protein belongs to the protein phosphatase inhibitor 2 family. As to quaternary structure, interacts with pppB.

Functionally, inhibitor of protein-phosphatase 1 (PP1). This chain is Protein phosphatase inhibitor 2 (dpiA), found in Dictyostelium discoideum (Social amoeba).